Consider the following 264-residue polypeptide: Large ribosomal subunit protein uL2 (264 aa).

The protein belongs to the universal ribosomal protein uL2 family.

Its subcellular location is the cytoplasm. The chain is Large ribosomal subunit protein uL2 (RPL8) from Tetrahymena thermophila (strain SB210).